The primary structure comprises 1390 residues: Bromodomain adjacent to zinc finger domain protein 2 (1390 aa).

Disordered regions lie at residues 30 to 67 (AKIQ…QNEA), 178 to 215 (AKKK…AANN), and 235 to 269 (QKQQ…DVKN). Over residues 35–45 (ATASSPSKSTN) the composition is skewed to polar residues. 2 stretches are compositionally biased toward low complexity: residues 46 to 63 (GTSA…TSSS) and 186 to 215 (ASTS…AANN). A compositionally biased stretch (basic and acidic residues) spans 243-269 (DTQKKADQAKKAKELAKQQQKEQDVKN). In terms of domain architecture, MBD spans 323-395 (KTNEAMLRLP…DNFLFNTKLV (73 aa)). Residues 524–588 (SQGFADALMV…LRLALEFPGM (65 aa)) form the DDT domain. Over residues 705 to 724 (KEEQNHESDSEPPTRPDTPK) the composition is skewed to basic and acidic residues. The disordered stretch occupies residues 705–729 (KEEQNHESDSEPPTRPDTPKKATVA). The segment at 1100–1149 (EALCQICKSMDGDEMLVCDGCESGCHMECFRPRMTKVPEGDWFCQRCREE) adopts a PHD-type zinc-finger fold. Residues 1218 to 1241 (EERELEDDNHAENGENTKNGHMNG) form a disordered region. Residues 1273–1377 (LPKNMNKELC…KFFQKRWKQL (105 aa)) enclose the Bromo domain.

This sequence belongs to the WAL family. As to quaternary structure, interacts with set-6. As to expression, broadly expressed in the nervous system, including head, body and tail neurons.

The protein localises to the nucleus. Its subcellular location is the chromosome. In terms of biological role, chromatin reader protein, involved in positively modulating the rate of age-related behavioral deterioration. Positively modulates the level of global trimethylated 'Lys-9' of histone H3 (H3K9me3), but not of H3K9me2 or H3K9me1. May repress the expression of mitochondrial function-related genes by occupying their promoter regions, working in concert with histone methyltransferase, set-6. Involved in modulation of the mitochondrial unfolded protein response (UPR). Negatively regulates expression of bas-1, a serotonin (5-HT) and dopamine synthesizing enzyme (DOPA decarboxylase), with aging. Negatively modulates levels of endogenous 5-HT and dopamine with aging. Involved in modulating longevity, probably as a result of enhanced stress resistance via mechanisms related to dietary restriction and mitochondrial function. This Caenorhabditis elegans protein is Bromodomain adjacent to zinc finger domain protein 2.